The chain runs to 402 residues: Protein kinase US3 homolog (402 aa).

Disordered stretches follow at residues 1–21 (MSSS…KVHD) and 46–88 (FPDS…SPET). Residues 102–386 (YNIVSSLSPG…AQDILMLPLF (285 aa)) form the Protein kinase domain. ATP-binding positions include 108–116 (LSPGSEGYI) and K129. Catalysis depends on D218, which acts as the Proton acceptor.

It belongs to the protein kinase superfamily. Ser/Thr protein kinase family. Phosphorylated by UL13 homolog; this phosphorylation regulates subsequent phosphorylation of UL31 and UL34 homologs by US3. Autophosphorylated.

Its subcellular location is the host cytoplasm. It localises to the host nucleus. It catalyses the reaction L-seryl-[protein] + ATP = O-phospho-L-seryl-[protein] + ADP + H(+). The catalysed reaction is L-threonyl-[protein] + ATP = O-phospho-L-threonyl-[protein] + ADP + H(+). Functionally, multifunctional serine/threonine kinase that plays a role in several processes including egress of virus particles from the nucleus, modulation of the actin cytoskeleton and inhibition of apoptosis. Phosphorylates UL31 and UL34 homologs, two critical regulators of capsid budding from nucleus to endoplasmic reticulum, thereby facilitating virion egress. Modulates and redistributes host components of the nuclear envelope, including LMNA, emerin/EMD and the nuclear matrix protein MATR3. Phosphorylates envelope glycoprotein B (gB), probably to direct it to the cell surface. Promotes virus intracellular spread by restructuring host cell cytoskeleton. Blocks host apoptosis to extend cell survival and allow efficient viral replication. Promotes viral gene expression by phosphorylating host HDAC2 to reduce viral genome silencing. This is Protein kinase US3 homolog (MDV092) from Gallus gallus (Chicken).